We begin with the raw amino-acid sequence, 285 residues long: Probable nudix hydrolase C6G9.05 (285 aa).

Residues 114 to 254 (TRFASVLMPL…DLLYVEFNID (141 aa)) form the Nudix hydrolase domain. The short motif at 153–175 (GRVEPSDGSHYYAALRETYEEIG) is the Nudix box element. E169 and E173 together coordinate Mg(2+).

The protein belongs to the Nudix hydrolase family. PCD1 subfamily. Requires Mn(2+) as cofactor. The cofactor is Mg(2+).

Its function is as follows. Probably mediates the hydrolysis of some nucleoside diphosphate derivatives. The protein is Probable nudix hydrolase C6G9.05 of Schizosaccharomyces pombe (strain 972 / ATCC 24843) (Fission yeast).